A 948-amino-acid chain; its full sequence is Protein translocase subunit SecA (948 aa).

ATP-binding positions include Gln90, 108-112 (GEGKT), and Asp509.

It belongs to the SecA family. As to quaternary structure, monomer and homodimer. Part of the essential Sec protein translocation apparatus which comprises SecA, SecYEG and auxiliary proteins SecDF. Other proteins may also be involved.

The protein localises to the cell inner membrane. Its subcellular location is the cellular thylakoid membrane. It localises to the cytoplasm. The enzyme catalyses ATP + H2O + cellular proteinSide 1 = ADP + phosphate + cellular proteinSide 2.. In terms of biological role, part of the Sec protein translocase complex. Interacts with the SecYEG preprotein conducting channel. Has a central role in coupling the hydrolysis of ATP to the transfer of proteins into and across the cell membrane, serving as an ATP-driven molecular motor driving the stepwise translocation of polypeptide chains across the membrane. Probably participates in protein translocation into and across both the cytoplasmic and thylakoid membranes in cyanobacterial cells. This chain is Protein translocase subunit SecA, found in Prochlorococcus marinus (strain MIT 9313).